A 150-amino-acid chain; its full sequence is UPF0756 membrane protein Asuc_1151 (150 aa).

Helical transmembrane passes span 1–21, 52–72, 82–102, and 123–143; these read MSLH…LGVL, YGLN…IVAG, LLHW…WLAG, and ILGV…AGIL.

The protein belongs to the UPF0756 family.

It is found in the cell membrane. In Actinobacillus succinogenes (strain ATCC 55618 / DSM 22257 / CCUG 43843 / 130Z), this protein is UPF0756 membrane protein Asuc_1151.